A 198-amino-acid chain; its full sequence is Imidazoleglycerol-phosphate dehydratase (198 aa).

Belongs to the imidazoleglycerol-phosphate dehydratase family.

It is found in the cytoplasm. The catalysed reaction is D-erythro-1-(imidazol-4-yl)glycerol 3-phosphate = 3-(imidazol-4-yl)-2-oxopropyl phosphate + H2O. It functions in the pathway amino-acid biosynthesis; L-histidine biosynthesis; L-histidine from 5-phospho-alpha-D-ribose 1-diphosphate: step 6/9. This Methylobacillus flagellatus (strain ATCC 51484 / DSM 6875 / VKM B-1610 / KT) protein is Imidazoleglycerol-phosphate dehydratase.